A 505-amino-acid chain; its full sequence is Salutaridine synthase (505 aa).

The helical transmembrane segment at 10-30 (DFWMIACTVIIVFALVKFMFS) threads the bilayer. Residue Cys-444 participates in heme binding.

The protein belongs to the cytochrome P450 family. Heme serves as cofactor.

It localises to the endoplasmic reticulum membrane. It carries out the reaction (R)-reticuline + reduced [NADPH--hemoprotein reductase] + O2 = salutaridine + oxidized [NADPH--hemoprotein reductase] + 2 H2O + H(+). Cytochrome P450 monooxygenase involved in biosynthesis of morphinan-type benzylisoquinoline and opiate alkaloids natural products. Catalyzes the formation of the morphinan alkaloid salutaridine by intramolecular phenol oxidation of (R)-reticuline without the incorporation of oxygen into the product. Can also use (R)-norreticuline as substrate. The sequence is that of Salutaridine synthase from Papaver somniferum (Opium poppy).